The sequence spans 354 residues: NADH-quinone oxidoreductase subunit H (354 aa).

8 consecutive transmembrane segments (helical) span residues 23–43, 91–111, 124–144, 162–182, 203–223, 250–270, 291–311, and 330–350; these read LVRA…LILW, YIIA…VVPF, LLYV…AGWA, ISYE…TGSL, ILSW…ISGV, GMAF…ISAM, IPGF…FIWL, and IFIP…VSPW.

It belongs to the complex I subunit 1 family. As to quaternary structure, NDH-1 is composed of 14 different subunits. Subunits NuoA, H, J, K, L, M, N constitute the membrane sector of the complex.

The protein localises to the cell inner membrane. It catalyses the reaction a quinone + NADH + 5 H(+)(in) = a quinol + NAD(+) + 4 H(+)(out). Functionally, NDH-1 shuttles electrons from NADH, via FMN and iron-sulfur (Fe-S) centers, to quinones in the respiratory chain. The immediate electron acceptor for the enzyme in this species is believed to be ubiquinone. Couples the redox reaction to proton translocation (for every two electrons transferred, four hydrogen ions are translocated across the cytoplasmic membrane), and thus conserves the redox energy in a proton gradient. This subunit may bind ubiquinone. This is NADH-quinone oxidoreductase subunit H from Ralstonia nicotianae (strain ATCC BAA-1114 / GMI1000) (Ralstonia solanacearum).